Consider the following 950-residue polypeptide: Oxysterol-binding protein-related protein 1 (950 aa).

Residues 1–237 (MNTEAEQQLL…NKVIYKALKR (237 aa)) form an interaction with RAB7A region. ANK repeat units lie at residues 47 to 76 (LGWT…EVNV), 80 to 109 (MGDT…DTTI), and 175 to 204 (LGNT…DPNL). A PH domain is found at 235 to 334 (LKRYEGPLWK…WLEAIEEHSA (100 aa)). The stretch at 430-463 (NFKLEQEQEKNKILSEALETLATEHHELEQSLVK) forms a coiled coil. Positions 469–485 (SILSEDEFYDALSDSES) match the FFAT motif. Ser499 bears the Phosphoserine mark. Positions 501-521 (EEEGEHLGSRKHRMSEEKDCG) are enriched in basic and acidic residues. Disordered regions lie at residues 501-527 (EEEG…DALS), 795-816 (KKNT…LDEM), and 881-913 (MENG…SEED). A coiled-coil region spans residues 877-913 (DIRAMENGEIDQASEEKKRLEEKQRAARKNRSKSEED). A compositionally biased stretch (basic and acidic residues) spans 890-901 (SEEKKRLEEKQR).

The protein belongs to the OSBP family. Interacts (via FFAT motif) with VAPA and VAPB. Interacts with the GTP-bound form of RAB7A. Interacts with OAS1B. Interacts (via FFAT motif) with MOSPD2 (via MSP domain).

The protein resides in the late endosome. In terms of biological role, binds phospholipids; exhibits strong binding to phosphatidic acid and weak binding to phosphatidylinositol 3-phosphate. Stabilizes GTP-bound RAB7A on late endosomes/lysosomes and alters functional properties of late endocytic compartments via its interaction with RAB7A. Binds 25-hydroxycholesterol and cholesterol. In Homo sapiens (Human), this protein is Oxysterol-binding protein-related protein 1.